Consider the following 310-residue polypeptide: Probable deoxyhypusine synthase (310 aa).

Catalysis depends on lysine 284, which acts as the Nucleophile.

It belongs to the deoxyhypusine synthase family. It depends on NAD(+) as a cofactor.

It catalyses the reaction [eIF5A protein]-L-lysine + spermidine = [eIF5A protein]-deoxyhypusine + propane-1,3-diamine. The protein operates within protein modification; eIF5A hypusination. In terms of biological role, catalyzes the NAD-dependent oxidative cleavage of spermidine and the subsequent transfer of the butylamine moiety of spermidine to the epsilon-amino group of a specific lysine residue of the eIF-5A precursor protein to form the intermediate deoxyhypusine residue. The chain is Probable deoxyhypusine synthase (dys) from Thermoplasma volcanium (strain ATCC 51530 / DSM 4299 / JCM 9571 / NBRC 15438 / GSS1).